We begin with the raw amino-acid sequence, 379 residues long: Leukocyte elastase inhibitor (379 aa).

Methionine 1 is subject to N-acetylmethionine. An N6-acetyllysine mark is found at lysine 137 and lysine 177. Positions 351 to 379 (NFNADHPFIFFIRHNPSANILFLGRFSSP) are CARD-binding motif (CBM).

This sequence belongs to the serpin family. Ov-serpin subfamily. In terms of assembly, monomer. Interacts (via C-terminus) with CASP1; CASP4 (via CARD domain) and CASP5; these interactions regulate the activity of inflammatory caspases. Interacts with PRTN3. Interacts with GZMH. Interacts with TMSB4. Post-translationally, the N-terminus is blocked.

It is found in the secreted. The protein resides in the cytoplasm. Its subcellular location is the cytolytic granule. It localises to the early endosome. Neutrophil serine protease inhibitor that plays an essential role in the regulation of the innate immune response, inflammation and cellular homeostasis. Acts primarily to protect the cell from proteases released in the cytoplasm during stress or infection. These proteases are important in killing microbes but when released from granules, these potent enzymes also destroy host proteins and contribute to mortality. Regulates the activity of the neutrophil proteases elastase, cathepsin G, proteinase-3, chymase, chymotrypsin, and kallikrein-3. Also acts as a potent intracellular inhibitor of GZMH by directly blocking its proteolytic activity. During inflammation, limits the activity of inflammatory caspases CASP1, CASP4 and CASP5 by suppressing their caspase-recruitment domain (CARD) oligomerization and enzymatic activation. When secreted, promotes the proliferation of beta-cells via its protease inhibitory function. This Equus caballus (Horse) protein is Leukocyte elastase inhibitor (SERPINB1).